Consider the following 361-residue polypeptide: Phospho-N-acetylmuramoyl-pentapeptide-transferase (361 aa).

Transmembrane regions (helical) follow at residues alanine 26–arginine 46, threonine 73–leucine 93, tyrosine 97–tyrosine 117, tyrosine 134–methionine 154, valine 168–serine 188, glycine 200–serine 220, threonine 237–phenylalanine 257, valine 264–isoleucine 284, isoleucine 289–valine 309, and isoleucine 340–isoleucine 360.

This sequence belongs to the glycosyltransferase 4 family. MraY subfamily. Mg(2+) serves as cofactor.

The protein localises to the cell inner membrane. The enzyme catalyses UDP-N-acetyl-alpha-D-muramoyl-L-alanyl-gamma-D-glutamyl-meso-2,6-diaminopimeloyl-D-alanyl-D-alanine + di-trans,octa-cis-undecaprenyl phosphate = di-trans,octa-cis-undecaprenyl diphospho-N-acetyl-alpha-D-muramoyl-L-alanyl-D-glutamyl-meso-2,6-diaminopimeloyl-D-alanyl-D-alanine + UMP. The protein operates within cell wall biogenesis; peptidoglycan biosynthesis. In terms of biological role, catalyzes the initial step of the lipid cycle reactions in the biosynthesis of the cell wall peptidoglycan: transfers peptidoglycan precursor phospho-MurNAc-pentapeptide from UDP-MurNAc-pentapeptide onto the lipid carrier undecaprenyl phosphate, yielding undecaprenyl-pyrophosphoryl-MurNAc-pentapeptide, known as lipid I. The protein is Phospho-N-acetylmuramoyl-pentapeptide-transferase of Marinobacter nauticus (strain ATCC 700491 / DSM 11845 / VT8) (Marinobacter aquaeolei).